The primary structure comprises 302 residues: Sulfate adenylyltransferase subunit 2 (302 aa).

Belongs to the PAPS reductase family. CysD subfamily. In terms of assembly, heterodimer composed of CysD, the smaller subunit, and CysN.

It catalyses the reaction sulfate + ATP + H(+) = adenosine 5'-phosphosulfate + diphosphate. The protein operates within sulfur metabolism; hydrogen sulfide biosynthesis; sulfite from sulfate: step 1/3. Its function is as follows. With CysN forms the ATP sulfurylase (ATPS) that catalyzes the adenylation of sulfate producing adenosine 5'-phosphosulfate (APS) and diphosphate, the first enzymatic step in sulfur assimilation pathway. APS synthesis involves the formation of a high-energy phosphoric-sulfuric acid anhydride bond driven by GTP hydrolysis by CysN coupled to ATP hydrolysis by CysD. In Yersinia enterocolitica serotype O:8 / biotype 1B (strain NCTC 13174 / 8081), this protein is Sulfate adenylyltransferase subunit 2.